Here is a 516-residue protein sequence, read N- to C-terminus: Threonine synthase 2, chloroplastic (516 aa).

Residues 1 to 33 (MASFSLPHSATYFPSHSETSLKPHSAASFTVRC) constitute a chloroplast transit peptide. Positions 1-37 (MASFSLPHSATYFPSHSETSLKPHSAASFTVRCTSAS) are enriched in polar residues. A disordered region spans residues 1–55 (MASFSLPHSATYFPSHSETSLKPHSAASFTVRCTSASPAVPPQTPQKPRRSPDEN). S-adenosyl-L-methionine contacts are provided by residues 133-135 (PYG), 156-158 (SAF), Asn-163, Leu-164, Lys-172, and Asn-178. Residue Lys-194 is modified to N6-(pyridoxal phosphate)lysine. Pyridoxal 5'-phosphate contacts are provided by residues 326 to 330 (GNLGN) and Thr-464.

It belongs to the threonine synthase family. In terms of assembly, homodimer. Pyridoxal 5'-phosphate serves as cofactor.

Its subcellular location is the plastid. The protein resides in the chloroplast. The catalysed reaction is O-phospho-L-homoserine + H2O = L-threonine + phosphate. Its pathway is amino-acid biosynthesis; L-threonine biosynthesis; L-threonine from L-aspartate: step 5/5. Its activity is regulated as follows. Allosterically activated by S-adenosyl-methionine (SAM). Catalyzes the gamma-elimination of phosphate from L-phosphohomoserine and the beta-addition of water to produce L-threonine. The sequence is that of Threonine synthase 2, chloroplastic (TS2) from Arabidopsis thaliana (Mouse-ear cress).